Consider the following 1477-residue polypeptide: Inositol hexakisphosphate and diphosphoinositol-pentakisphosphate kinase 1 (1477 aa).

The segment at 27–47 is disordered; that stretch reads TRGLGMRPEESDSELLEDEED. A compositionally biased stretch (acidic residues) spans 37–47; sequence SDSELLEDEED. 64–65 is a binding site for substrate; the sequence is KK. Residues R145, K198, H205, R224, 248 to 251, and 257 to 259 contribute to the ATP site; these read EEFM and DVK. Residue 224–225 participates in substrate binding; sequence RK. Substrate contacts are provided by K259 and R273. ATP-binding positions include S275, D320, and 332-334; that span reads DVN. 337-340 provides a ligand contact to substrate; it reads SFVK. The polyphosphoinositide-binding domain stretch occupies residues 382–453; that stretch reads PTTSGTMMEL…VLDITRLLLA (72 aa). The disordered stretch occupies residues 910-1016; it reads KGVEEEGSAP…PTEMKQSGLG (107 aa). A phosphoserine mark is found at S940 and S983. Polar residues predominate over residues 1001–1016; that stretch reads FSSSRPPTEMKQSGLG. S1033, S1069, S1141, and S1148 each carry phosphoserine. Disordered regions lie at residues 1131 to 1248 and 1438 to 1477; these read HSNQ…KPCQ and REEV…SFSH. Residues 1164 to 1182 are compositionally biased toward low complexity; it reads SSGPSSTVSSAGPSSPTAV. The span at 1446–1460 shows a compositional bias: polar residues; that stretch reads CPPSNANPQSQSLAP.

It belongs to the histidine acid phosphatase family. VIP1 subfamily.

Its subcellular location is the cytoplasm. The protein resides in the cytosol. It localises to the cell membrane. The enzyme catalyses 1D-myo-inositol hexakisphosphate + ATP = 1-diphospho-1D-myo-inositol 2,3,4,5,6-pentakisphosphate + ADP. It carries out the reaction 5-diphospho-1D-myo-inositol 1,2,3,4,6-pentakisphosphate + ATP + H(+) = 1,5-bis(diphospho)-1D-myo-inositol 2,3,4,6-tetrakisphosphate + ADP. In terms of biological role, bifunctional inositol kinase that acts in concert with the IP6K kinases IP6K1, IP6K2 and IP6K3 to synthesize the diphosphate group-containing inositol pyrophosphates diphosphoinositol pentakisphosphate, PP-InsP5, and bis-diphosphoinositol tetrakisphosphate, (PP)2-InsP4. PP-InsP5 and (PP)2-InsP4, also respectively called InsP7 and InsP8, regulate a variety of cellular processes, including apoptosis, vesicle trafficking, cytoskeletal dynamics, exocytosis, insulin signaling and neutrophil activation. Phosphorylates inositol hexakisphosphate (InsP6) at position 1 to produce PP-InsP5 which is in turn phosphorylated by IP6Ks to produce (PP)2-InsP4. Alternatively, phosphorylates PP-InsP5 at position 1, produced by IP6Ks from InsP6, to produce (PP)2-InsP4. Activated when cells are exposed to hyperosmotic stress. The polypeptide is Inositol hexakisphosphate and diphosphoinositol-pentakisphosphate kinase 1 (Bos taurus (Bovine)).